The primary structure comprises 305 residues: Acetylglutamate kinase (305 aa).

Residues 78-79 (GG), Arg-100, and Asn-202 contribute to the substrate site.

The protein belongs to the acetylglutamate kinase family. ArgB subfamily.

It is found in the cytoplasm. It catalyses the reaction N-acetyl-L-glutamate + ATP = N-acetyl-L-glutamyl 5-phosphate + ADP. Its pathway is amino-acid biosynthesis; L-arginine biosynthesis; N(2)-acetyl-L-ornithine from L-glutamate: step 2/4. Catalyzes the ATP-dependent phosphorylation of N-acetyl-L-glutamate. In Polaromonas sp. (strain JS666 / ATCC BAA-500), this protein is Acetylglutamate kinase.